A 544-amino-acid polypeptide reads, in one-letter code: O-phosphoserine--tRNA(Cys) ligase (544 aa).

Substrate contacts are provided by residues 194–196 (HMT), 239–241 (SAS), 281–282 (YY), and N335.

This sequence belongs to the class-II aminoacyl-tRNA synthetase family. O-phosphoseryl-tRNA(Cys) synthetase subfamily. In terms of assembly, homotetramer. Interacts with SepCysS.

The catalysed reaction is tRNA(Cys) + O-phospho-L-serine + ATP = O-phospho-L-seryl-tRNA(Cys) + AMP + diphosphate. Its function is as follows. Catalyzes the attachment of O-phosphoserine (Sep) to tRNA(Cys). This is O-phosphoserine--tRNA(Cys) ligase from Methanopyrus kandleri (strain AV19 / DSM 6324 / JCM 9639 / NBRC 100938).